Reading from the N-terminus, the 267-residue chain is Glutamate racemase (267 aa).

Substrate-binding positions include 13–14 and 45–46; these read DS and YS. The Proton donor/acceptor role is filled by cysteine 77. 78-79 lines the substrate pocket; sequence NT. The Proton donor/acceptor role is filled by cysteine 188. A substrate-binding site is contributed by 189–190; that stretch reads TH.

The protein belongs to the aspartate/glutamate racemases family.

The catalysed reaction is L-glutamate = D-glutamate. Its pathway is cell wall biogenesis; peptidoglycan biosynthesis. Its function is as follows. Provides the (R)-glutamate required for cell wall biosynthesis. This chain is Glutamate racemase, found in Histophilus somni (strain 2336) (Haemophilus somnus).